Here is a 106-residue protein sequence, read N- to C-terminus: Thioredoxin-like protein YusE (106 aa).

Positions 1–101 constitute a Thioredoxin domain; the sequence is MKELQEHELD…LYELIKQKSS (101 aa). The cysteines at positions 26 and 29 are disulfide-linked.

This is Thioredoxin-like protein YusE (yusE) from Bacillus subtilis (strain 168).